The primary structure comprises 373 residues: 3-dehydroquinate synthase (373 aa).

Residues 120 to 124, 144 to 145, lysine 157, lysine 166, and 184 to 187 each bind NAD(+); these read GVVGD, TT, and FLKT. Zn(2+) contacts are provided by glutamate 199, histidine 262, and histidine 278.

This sequence belongs to the sugar phosphate cyclases superfamily. Dehydroquinate synthase family. It depends on NAD(+) as a cofactor. Requires Co(2+) as cofactor. Zn(2+) serves as cofactor.

It is found in the cytoplasm. It catalyses the reaction 7-phospho-2-dehydro-3-deoxy-D-arabino-heptonate = 3-dehydroquinate + phosphate. It participates in metabolic intermediate biosynthesis; chorismate biosynthesis; chorismate from D-erythrose 4-phosphate and phosphoenolpyruvate: step 2/7. Functionally, catalyzes the conversion of 3-deoxy-D-arabino-heptulosonate 7-phosphate (DAHP) to dehydroquinate (DHQ). The protein is 3-dehydroquinate synthase of Clostridium tetani (strain Massachusetts / E88).